The following is a 124-amino-acid chain: Small ribosomal subunit protein uS12 (124 aa).

Asp-89 carries the 3-methylthioaspartic acid modification.

This sequence belongs to the universal ribosomal protein uS12 family. As to quaternary structure, part of the 30S ribosomal subunit. Contacts proteins S8 and S17. May interact with IF1 in the 30S initiation complex.

Its function is as follows. With S4 and S5 plays an important role in translational accuracy. Interacts with and stabilizes bases of the 16S rRNA that are involved in tRNA selection in the A site and with the mRNA backbone. Located at the interface of the 30S and 50S subunits, it traverses the body of the 30S subunit contacting proteins on the other side and probably holding the rRNA structure together. The combined cluster of proteins S8, S12 and S17 appears to hold together the shoulder and platform of the 30S subunit. This is Small ribosomal subunit protein uS12 from Thermoanaerobacter pseudethanolicus (strain ATCC 33223 / 39E) (Clostridium thermohydrosulfuricum).